A 203-amino-acid polypeptide reads, in one-letter code: uncharacterized protein (203 aa).

This is an uncharacterized protein from Aquifex aeolicus (strain VF5).